Here is a 332-residue protein sequence, read N- to C-terminus: Serpentine receptor class alpha-10 (332 aa).

Over 1-26 the chain is Extracellular; that stretch reads MTSSNISICATEDQMVLQTSLLLRVN. The helical transmembrane segment at 27–47 threads the bilayer; sequence VILMTTVAIFTFVLTYRALFI. Residues 48 to 64 are Cytoplasmic-facing; sequence LKQRPIFHKSTKILLYT. A helical transmembrane segment spans residues 65-85; that stretch reads SLIFVNIHEIIFMVIQCVAFI. At 86–109 the chain is on the extracellular side; that stretch reads RSFTLSDKPCEIMRTTLECRFKNH. The helical transmembrane segment at 110-132 threads the bilayer; the sequence is VLIFGIAGMNFNQFGLTVDRLLA. Residues 133-146 lie on the Cytoplasmic side of the membrane; the sequence is TVIPQTYSHLGSFP. Residues 147-167 traverse the membrane as a helical segment; that stretch reads GILISILVIGCSIAAPLIIAI. At 168–191 the chain is on the extracellular side; it reads GDPYDDIVPNCFFFPQHSAPRANV. A helical transmembrane segment spans residues 192 to 212; sequence FLIILSALVIASIFLNLIIIF. Residues 213–239 lie on the Cytoplasmic side of the membrane; the sequence is ANKKLEKGTRYYVSQRYQKREALISTR. A helical membrane pass occupies residues 240–260; the sequence is IIVYIAASQFLGMVLYSTIVL. Residues 261–276 lie on the Extracellular side of the membrane; that stretch reads TLRLHKSMIPVSMYHN. A helical membrane pass occupies residues 277-297; the sequence is IVWWAYTVPFAAVALPALLIH. The Cytoplasmic segment spans residues 298 to 332; it reads RINLVGSNRKRVINRITAKVETQEEHMKSLKELWG.

This sequence belongs to the nematode receptor-like protein sra family.

It is found in the membrane. The polypeptide is Serpentine receptor class alpha-10 (Caenorhabditis briggsae).